A 190-amino-acid polypeptide reads, in one-letter code: Somatotropin (190 aa).

His19 lines the Zn(2+) pocket. The cysteines at positions 52 and 163 are disulfide-linked. A Phosphoserine modification is found at Ser105. Residue Glu172 coordinates Zn(2+). Cys180 and Cys188 are disulfide-bonded.

Belongs to the somatotropin/prolactin family.

It localises to the secreted. Its function is as follows. Plays an important role in growth control. Its major role in stimulating body growth is to stimulate the liver and other tissues to secrete IGF1. It stimulates both the differentiation and proliferation of myoblasts. It also stimulates amino acid uptake and protein synthesis in muscle and other tissues. The protein is Somatotropin (GH1) of Balaenoptera borealis (Sei whale).